The chain runs to 257 residues: Adenosylcobinamide-GDP ribazoletransferase (257 aa).

The next 7 helical transmembrane spans lie at 30 to 50, 52 to 72, 109 to 129, 132 to 152, 175 to 195, 198 to 218, and 237 to 257; these read IVYF…IGWI, MLLF…VLIT, SLLA…DIIS, SLWV…LLTY, LITA…FIFL, NIVL…IILF, and GIEL…FMFF.

This sequence belongs to the CobS family. It depends on Mg(2+) as a cofactor.

The protein localises to the cell membrane. It carries out the reaction alpha-ribazole + adenosylcob(III)inamide-GDP = adenosylcob(III)alamin + GMP + H(+). It catalyses the reaction alpha-ribazole 5'-phosphate + adenosylcob(III)inamide-GDP = adenosylcob(III)alamin 5'-phosphate + GMP + H(+). The protein operates within cofactor biosynthesis; adenosylcobalamin biosynthesis; adenosylcobalamin from cob(II)yrinate a,c-diamide: step 7/7. Functionally, joins adenosylcobinamide-GDP and alpha-ribazole to generate adenosylcobalamin (Ado-cobalamin). Also synthesizes adenosylcobalamin 5'-phosphate from adenosylcobinamide-GDP and alpha-ribazole 5'-phosphate. This is Adenosylcobinamide-GDP ribazoletransferase from Clostridioides difficile (strain 630) (Peptoclostridium difficile).